The following is a 395-amino-acid chain: MNVLVINSGSSSIKYQLFAMPEAKVLAKGLLEKIGEEISALKHTAVEKGKEKKIEQKVADHKAGMSLIFSLLTDKEVGVIADMNEISAVGHRVVHGGEAFNKSILITDEAIKAIEACCDIAPLHNPAGLQGISACKEILKDVKMVGVFDTSFHQTIPDYAYMYAVPHEWYDKYKIRRYGFHGTSHKYVYGEFCKVTNKPNANVIVCHLGNGASVTAVKNGESIDTSMGLTPLEGLVMGTRSGDMDPAVPTFVMAKENLSAKEMDNILNKKSGLLGVSGVSNDMRNLEEAAKTNPKAELAITMFCYRVKKYIGAYMAALGHLDGIVFTGGIGENSAYIRGRILEGLDELGIKCDADKNSKARGCANFEKDGAAIKLYVIATDEEKAIAMDTYNLAK.

Asn-7 is a Mg(2+) binding site. Residue Lys-14 coordinates ATP. Substrate is bound at residue Arg-92. The Proton donor/acceptor role is filled by Asp-149. ATP contacts are provided by residues His-207 to Gly-211, Asp-282 to Arg-284, and Gly-329 to Asn-333. Glu-382 serves as a coordination point for Mg(2+).

The protein belongs to the acetokinase family. Homodimer. It depends on Mg(2+) as a cofactor. Mn(2+) serves as cofactor.

It is found in the cytoplasm. The catalysed reaction is acetate + ATP = acetyl phosphate + ADP. The protein operates within metabolic intermediate biosynthesis; acetyl-CoA biosynthesis; acetyl-CoA from acetate: step 1/2. Functionally, catalyzes the formation of acetyl phosphate from acetate and ATP. Can also catalyze the reverse reaction. The protein is Acetate kinase of Brachyspira hyodysenteriae (strain ATCC 49526 / WA1).